Here is a 388-residue protein sequence, read N- to C-terminus: Succinate--CoA ligase [ADP-forming] subunit beta (388 aa).

An ATP-grasp domain is found at 9 to 244 (KQLFREYGLP…TTQDDEREMH (236 aa)). ATP is bound by residues Lys-46, 53-55 (GRG), Glu-99, Ser-102, and Glu-107. Mg(2+) is bound by residues Asn-199 and Asp-213. Residues Asn-264 and 321–323 (GIV) contribute to the substrate site.

It belongs to the succinate/malate CoA ligase beta subunit family. Heterotetramer of two alpha and two beta subunits. The cofactor is Mg(2+).

The catalysed reaction is succinate + ATP + CoA = succinyl-CoA + ADP + phosphate. The enzyme catalyses GTP + succinate + CoA = succinyl-CoA + GDP + phosphate. It participates in carbohydrate metabolism; tricarboxylic acid cycle; succinate from succinyl-CoA (ligase route): step 1/1. Succinyl-CoA synthetase functions in the citric acid cycle (TCA), coupling the hydrolysis of succinyl-CoA to the synthesis of either ATP or GTP and thus represents the only step of substrate-level phosphorylation in the TCA. The beta subunit provides nucleotide specificity of the enzyme and binds the substrate succinate, while the binding sites for coenzyme A and phosphate are found in the alpha subunit. This is Succinate--CoA ligase [ADP-forming] subunit beta from Psychromonas ingrahamii (strain DSM 17664 / CCUG 51855 / 37).